The chain runs to 339 residues: Phosphate acyltransferase (339 aa).

Belongs to the PlsX family. As to quaternary structure, homodimer. Probably interacts with PlsY.

Its subcellular location is the cytoplasm. The enzyme catalyses a fatty acyl-[ACP] + phosphate = an acyl phosphate + holo-[ACP]. It functions in the pathway lipid metabolism; phospholipid metabolism. Catalyzes the reversible formation of acyl-phosphate (acyl-PO(4)) from acyl-[acyl-carrier-protein] (acyl-ACP). This enzyme utilizes acyl-ACP as fatty acyl donor, but not acyl-CoA. This is Phosphate acyltransferase from Clostridium perfringens (strain ATCC 13124 / DSM 756 / JCM 1290 / NCIMB 6125 / NCTC 8237 / Type A).